A 274-amino-acid polypeptide reads, in one-letter code: NH(3)-dependent NAD(+) synthetase (274 aa).

Position 46-53 (46-53 (GISGGQDS)) interacts with ATP. Position 52 (aspartate 52) interacts with Mg(2+). Arginine 140 is a binding site for deamido-NAD(+). Threonine 160 contacts ATP. Glutamate 165 serves as a coordination point for Mg(2+). Residues lysine 173 and aspartate 180 each coordinate deamido-NAD(+). ATP-binding residues include lysine 189 and threonine 211. Residue 260–261 (HK) coordinates deamido-NAD(+).

The protein belongs to the NAD synthetase family. In terms of assembly, homodimer.

The enzyme catalyses deamido-NAD(+) + NH4(+) + ATP = AMP + diphosphate + NAD(+) + H(+). The protein operates within cofactor biosynthesis; NAD(+) biosynthesis; NAD(+) from deamido-NAD(+) (ammonia route): step 1/1. Catalyzes the ATP-dependent amidation of deamido-NAD to form NAD. Uses ammonia as a nitrogen source. This is NH(3)-dependent NAD(+) synthetase from Streptococcus suis (strain 05ZYH33).